The following is a 44-amino-acid chain: Cytochrome b559 subunit beta (44 aa).

The chain crosses the membrane as a helical span at residues 19–35 (WLAVHTLAVPTVFFVGA). His-23 serves as a coordination point for heme.

Belongs to the PsbE/PsbF family. Heterodimer of an alpha subunit and a beta subunit. PSII is composed of 1 copy each of membrane proteins PsbA, PsbB, PsbC, PsbD, PsbE, PsbF, PsbH, PsbI, PsbJ, PsbK, PsbL, PsbM, PsbT, PsbX, PsbY, PsbZ, Psb30/Ycf12, peripheral proteins PsbO, CyanoQ (PsbQ), PsbU, PsbV and a large number of cofactors. It forms dimeric complexes. Heme b serves as cofactor.

The protein resides in the cellular thylakoid membrane. This b-type cytochrome is tightly associated with the reaction center of photosystem II (PSII). PSII is a light-driven water:plastoquinone oxidoreductase that uses light energy to abstract electrons from H(2)O, generating O(2) and a proton gradient subsequently used for ATP formation. It consists of a core antenna complex that captures photons, and an electron transfer chain that converts photonic excitation into a charge separation. This chain is Cytochrome b559 subunit beta, found in Crocosphaera subtropica (strain ATCC 51142 / BH68) (Cyanothece sp. (strain ATCC 51142)).